A 55-amino-acid chain; its full sequence is ATP synthase F(0) complex subunit 8 (55 aa).

Residues 10-32 traverse the membrane as a helical segment; it reads FFTMLTTWLTFLLLIQPKLLSFI.

Belongs to the ATPase protein 8 family. As to quaternary structure, component of the ATP synthase complex composed at least of ATP5F1A/subunit alpha, ATP5F1B/subunit beta, ATP5MC1/subunit c (homooctomer), MT-ATP6/subunit a, MT-ATP8/subunit 8, ATP5ME/subunit e, ATP5MF/subunit f, ATP5MG/subunit g, ATP5MK/subunit k, ATP5MJ/subunit j, ATP5F1C/subunit gamma, ATP5F1D/subunit delta, ATP5F1E/subunit epsilon, ATP5PF/subunit F6, ATP5PB/subunit b, ATP5PD/subunit d, ATP5PO/subunit OSCP. ATP synthase complex consists of a soluble F(1) head domain (subunits alpha(3) and beta(3)) - the catalytic core - and a membrane F(0) domain - the membrane proton channel (subunits c, a, 8, e, f, g, k and j). These two domains are linked by a central stalk (subunits gamma, delta, and epsilon) rotating inside the F1 region and a stationary peripheral stalk (subunits F6, b, d, and OSCP).

Its subcellular location is the mitochondrion membrane. Functionally, subunit 8, of the mitochondrial membrane ATP synthase complex (F(1)F(0) ATP synthase or Complex V) that produces ATP from ADP in the presence of a proton gradient across the membrane which is generated by electron transport complexes of the respiratory chain. ATP synthase complex consist of a soluble F(1) head domain - the catalytic core - and a membrane F(1) domain - the membrane proton channel. These two domains are linked by a central stalk rotating inside the F(1) region and a stationary peripheral stalk. During catalysis, ATP synthesis in the catalytic domain of F(1) is coupled via a rotary mechanism of the central stalk subunits to proton translocation. In vivo, can only synthesize ATP although its ATP hydrolase activity can be activated artificially in vitro. Part of the complex F(0) domain. The polypeptide is ATP synthase F(0) complex subunit 8 (Guira guira (Guira cuckoo)).